Reading from the N-terminus, the 291-residue chain is MANTNVKEKELAKHTDQSQESISTVVSSNEVKHNKESDSNKKVVYSTQNLDLWYGDTHALQNINLDILENNVTAIIGPSGCGKSTYIKTLNRMVELVPSVKTAGKILYRDQNIFDENYSKEKLRTNVGMVFQQPNPFPKSIYDNITYGPKTHGIKDKKLLDEIVEKSLRGAAIWDELKDRLHTNAYGLSGGQQQRVCIARCLAIEPDVILMDEPTSALDPISTLRVEELVQELKENYSIIMVTHNMQQAARVSDKTAFFLNGYVNEYDDTDKIFSNPSDKQTEDYISGRFG.

Residues 1–17 (MANTNVKEKELAKHTDQ) show a composition bias toward basic and acidic residues. The segment at 1–40 (MANTNVKEKELAKHTDQSQESISTVVSSNEVKHNKESDSN) is disordered. The segment covering 18 to 29 (SQESISTVVSSN) has biased composition (polar residues). Residues 30-40 (EVKHNKESDSN) are compositionally biased toward basic and acidic residues. The 242-residue stretch at 45–286 (YSTQNLDLWY…PSDKQTEDYI (242 aa)) folds into the ABC transporter domain. Residue 77–84 (GPSGCGKS) participates in ATP binding.

Belongs to the ABC transporter superfamily. Phosphate importer (TC 3.A.1.7) family. As to quaternary structure, the complex is composed of two ATP-binding proteins (PstB), two transmembrane proteins (PstC and PstA) and a solute-binding protein (PstS).

The protein localises to the cell membrane. The catalysed reaction is phosphate(out) + ATP + H2O = ADP + 2 phosphate(in) + H(+). Functionally, part of the ABC transporter complex PstSACB involved in phosphate import. Responsible for energy coupling to the transport system. The protein is Phosphate import ATP-binding protein PstB of Staphylococcus haemolyticus (strain JCSC1435).